The chain runs to 518 residues: Sugar transport protein MST3 (518 aa).

Residues 1 to 18 (MAGGAVVSTGAGKDYPGK) are Cytoplasmic-facing. Residues 19–39 (LTLFVFFTCVVAATGGLIFGY) traverse the membrane as a helical segment. The Extracellular portion of the chain corresponds to 40-80 (DIGISGGVTSMDPFLRKFFPEVYRKKQMADKNNQYCKYDNQ). A helical membrane pass occupies residues 81-101 (LLQTFTSSLYLAALVSSFFAA). The Cytoplasmic portion of the chain corresponds to 102 to 117 (TVTRVLGRKWSMFAGG). A helical transmembrane segment spans residues 118-138 (LTFLIGAALNGAAENVAMLIV). Over 139–140 (GR) the chain is Extracellular. The chain crosses the membrane as a helical span at residues 141–161 (ILLGVGVGFANQSVPVYLSEM). Residues 162–167 (APARLR) are Cytoplasmic-facing. Residues 168–188 (GMLNIGFQLMITIGILAAELI) form a helical membrane-spanning segment. The Extracellular segment spans residues 189–202 (NYGTAKIKAGWGWR). The chain crosses the membrane as a helical span at residues 203–223 (VSLALAAVPAAIITLGSLFLP). The Cytoplasmic segment spans residues 224-290 (DTPNSLIDRG…YRAQLTMAIC (67 aa)). The helical transmembrane segment at 291-311 (IPFFQQLTGINVIMFYAPVLF) threads the bilayer. Residues 312–322 (DTLGFKSDASL) lie on the Extracellular side of the membrane. The chain crosses the membrane as a helical span at residues 323–343 (MSAVITGLVNVFATLVSIFTV). The Cytoplasmic segment spans residues 344 to 351 (DRLGRRKL). A helical transmembrane segment spans residues 352–372 (FLQGGAQMVVCQVVVGTLIAV). Residues 373-387 (KFGTSGIGDIPKGYA) are Extracellular-facing. Residues 388–408 (AVVVLFICMYVAGFAWSWGPL) form a helical membrane-spanning segment. The Cytoplasmic segment spans residues 409 to 427 (GWLVPSEIFPLEIRPAGQS). The helical transmembrane segment at 428–448 (INVSVNMLFTFVIAQAFLTML) threads the bilayer. Topologically, residues 449–452 (CHMK) are extracellular. Residues 453–473 (FGLFYFFAGWVVIMTVFIALF) traverse the membrane as a helical segment. Residues 474-518 (LPETKNVPIEEMVLVWKSHWFWRRFIGDHDVHVGANHVSNNKLQP) lie on the Cytoplasmic side of the membrane.

It belongs to the major facilitator superfamily. Sugar transporter (TC 2.A.1.1) family. As to expression, highly expressed in roots. Expressed in xylem and sclerenchyma cells of roots. Expressed at low levels in leaves.

The protein localises to the membrane. Functionally, mediates active uptake of hexoses by sugar:proton symport. Can transport glucose, xylose and 3-O-methylglucose. May be involved in the accumulation of monosaccharides required for cell wall synthesis during root development. The polypeptide is Sugar transport protein MST3 (Oryza sativa subsp. japonica (Rice)).